Consider the following 341-residue polypeptide: Glycerol-3-phosphate dehydrogenase [NAD(P)+] (341 aa).

Positions 15, 16, 36, and 110 each coordinate NADPH. Sn-glycerol 3-phosphate-binding residues include Lys110, Gly139, and Ser141. Ala143 provides a ligand contact to NADPH. The sn-glycerol 3-phosphate site is built by Lys194, Asp247, Ser257, Arg258, and Asn259. The Proton acceptor role is filled by Lys194. An NADPH-binding site is contributed by Arg258. Positions 282 and 284 each coordinate NADPH.

This sequence belongs to the NAD-dependent glycerol-3-phosphate dehydrogenase family.

The protein localises to the cytoplasm. The catalysed reaction is sn-glycerol 3-phosphate + NAD(+) = dihydroxyacetone phosphate + NADH + H(+). It catalyses the reaction sn-glycerol 3-phosphate + NADP(+) = dihydroxyacetone phosphate + NADPH + H(+). Its pathway is membrane lipid metabolism; glycerophospholipid metabolism. Catalyzes the reduction of the glycolytic intermediate dihydroxyacetone phosphate (DHAP) to sn-glycerol 3-phosphate (G3P), the key precursor for phospholipid synthesis. The sequence is that of Glycerol-3-phosphate dehydrogenase [NAD(P)+] from Stenotrophomonas maltophilia (strain K279a).